A 543-amino-acid chain; its full sequence is Chaperonin GroEL (543 aa).

ATP is bound by residues T29–P32, D86–T90, G413, and D504.

The protein belongs to the chaperonin (HSP60) family. As to quaternary structure, forms a cylinder of 14 subunits composed of two heptameric rings stacked back-to-back. Interacts with the co-chaperonin GroES.

Its subcellular location is the cytoplasm. The catalysed reaction is ATP + H2O + a folded polypeptide = ADP + phosphate + an unfolded polypeptide.. Its function is as follows. Together with its co-chaperonin GroES, plays an essential role in assisting protein folding. The GroEL-GroES system forms a nano-cage that allows encapsulation of the non-native substrate proteins and provides a physical environment optimized to promote and accelerate protein folding. This Mycoplasma pneumoniae (strain ATCC 29342 / M129 / Subtype 1) (Mycoplasmoides pneumoniae) protein is Chaperonin GroEL.